The following is a 296-amino-acid chain: Sulfotransferase 1C2 (296 aa).

Position 49 to 54 (49 to 54 (KSGTTW)) interacts with 3'-phosphoadenylyl sulfate. A substrate-binding site is contributed by 107–109 (RTH). The active-site Proton acceptor is the H109. Residues R131, S139, Y194, and 228 to 233 (TSFEKM) contribute to the 3'-phosphoadenylyl sulfate site. S139 is subject to Phosphoserine. Position 254 is a phosphoserine (S254). Position 256-260 (256-260 (FMRKG)) interacts with 3'-phosphoadenylyl sulfate.

Belongs to the sulfotransferase 1 family. Found in gastrointestinal tract tissues, liver and kidney.

It is found in the cytoplasm. Its subcellular location is the lysosome. It localises to the mitochondrion. It carries out the reaction a phenol + 3'-phosphoadenylyl sulfate = an aryl sulfate + adenosine 3',5'-bisphosphate + H(+). The catalysed reaction is cholesterol + 3'-phosphoadenylyl sulfate = cholesterol sulfate + adenosine 3',5'-bisphosphate + H(+). Its function is as follows. Sulfotransferase that utilizes 3'-phospho-5'-adenylyl sulfate (PAPS) to catalyze the sulfate conjugation of phenolic compounds. Does not transfer sulfate to steroids, dopamine, acetaminophen, or alpha-naphthol. Except in mitochondria, where it can add sulfate to cholesterol producing cholesterol sulfate, which alters mitochondrial membrane organization, and impacts protein complex mobility increasing state-III respiration, thereby modulating mitochondrial respiration. Catalyzes the sulfation of the carcinogenic N-hydroxy-2-acetylaminofluorene leading to highly reactive intermediates capable of forming DNA adducts, potentially resulting in mutagenesis. The chain is Sulfotransferase 1C2 (SULT1C2) from Oryctolagus cuniculus (Rabbit).